A 495-amino-acid polypeptide reads, in one-letter code: MSRIRHHRFIQSCLVISTLLITLTGCQVESEPKTKLEQIRERGILRVSTLNNQLSYYIGSNGPTGLDYDLAKAFAEKLEVKLEITPAYTYSGLFPALERNEVDIIAANMTITPERLQKFRPGPVYYYVSQQVVYKKGSWRPRNIKNLTQLDENLTIVKDSSFEGTLIKLKEKYPNLDWNTAADTDVSELLKKVATGEIHYTLADSVELSLTQRIHPDLAVAFEVTEDQPVAWFLQQTEDDSLQALLIEFFGELKESGKLALLEEKYFGHVESFDYVDTRAFIRALESKLPKWEPLFKKYAGDFDWRFLAALSYQESHWNPLAKSPTGVRGMMMLTLPTAQSVGVKNRLNPEQSIRGGAEYLRRIVKRVPDSITEHEKIWFALASYNIGFGHMMDARRLTQRLGGDPDSWTDVKDNLPLLRQQRYYRYLRYGFARGDEAQNYVENIRRYYQSIIGYEQEQANKLKQEELTVEDLQVIDVPLSSAEASVSQAIETKK.

A signal peptide spans 1–30; the sequence is MSRIRHHRFIQSCLVISTLLITLTGCQVES. The non-LT domain stretch occupies residues 31–270; the sequence is EPKTKLEQIR…LLEEKYFGHV (240 aa). An LT domain region spans residues 272 to 495; that stretch reads SFDYVDTRAF…SVSQAIETKK (224 aa). Glutamate 315 is a catalytic residue.

The protein in the N-terminal section; belongs to the bacterial solute-binding protein 3 family. In the C-terminal section; belongs to the transglycosylase Slt family.

It is found in the cell outer membrane. It catalyses the reaction Exolytic cleavage of the (1-&gt;4)-beta-glycosidic linkage between N-acetylmuramic acid (MurNAc) and N-acetylglucosamine (GlcNAc) residues in peptidoglycan, from either the reducing or the non-reducing ends of the peptidoglycan chains, with concomitant formation of a 1,6-anhydrobond in the MurNAc residue.. Functionally, murein-degrading enzyme that degrades murein glycan strands and insoluble, high-molecular weight murein sacculi, with the concomitant formation of a 1,6-anhydromuramoyl product. Lytic transglycosylases (LTs) play an integral role in the metabolism of the peptidoglycan (PG) sacculus. Their lytic action creates space within the PG sacculus to allow for its expansion as well as for the insertion of various structures such as secretion systems and flagella. The sequence is that of Membrane-bound lytic murein transglycosylase F from Aliivibrio fischeri (strain ATCC 700601 / ES114) (Vibrio fischeri).